Reading from the N-terminus, the 316-residue chain is tRNA dimethylallyltransferase (316 aa).

17 to 24 (GPTASGKT) is an ATP binding site. Substrate is bound at residue 19–24 (TASGKT). Interaction with substrate tRNA regions lie at residues 42–45 (DSAL), 166–170 (QRLSR), and 247–252 (RCVGYR).

Belongs to the IPP transferase family. As to quaternary structure, monomer. Mg(2+) is required as a cofactor.

The enzyme catalyses adenosine(37) in tRNA + dimethylallyl diphosphate = N(6)-dimethylallyladenosine(37) in tRNA + diphosphate. Functionally, catalyzes the transfer of a dimethylallyl group onto the adenine at position 37 in tRNAs that read codons beginning with uridine, leading to the formation of N6-(dimethylallyl)adenosine (i(6)A). The chain is tRNA dimethylallyltransferase from Salmonella schwarzengrund (strain CVM19633).